A 380-amino-acid polypeptide reads, in one-letter code: Cobalt-precorrin-5B C(1)-methyltransferase (380 aa).

It belongs to the CbiD family.

It catalyses the reaction Co-precorrin-5B + S-adenosyl-L-methionine = Co-precorrin-6A + S-adenosyl-L-homocysteine. Its pathway is cofactor biosynthesis; adenosylcobalamin biosynthesis; cob(II)yrinate a,c-diamide from sirohydrochlorin (anaerobic route): step 6/10. Its function is as follows. Catalyzes the methylation of C-1 in cobalt-precorrin-5B to form cobalt-precorrin-6A. This is Cobalt-precorrin-5B C(1)-methyltransferase from Salinispora arenicola (strain CNS-205).